Consider the following 208-residue polypeptide: Putative thymidylate kinase (208 aa).

The tract at residues 8 to 15 (GIDGSGVS) is defective ATP-binding.

This sequence belongs to the thymidylate kinase family.

It carries out the reaction dTMP + ATP = dTDP + ADP. The protein is Putative thymidylate kinase (tmk) of Aeropyrum pernix (strain ATCC 700893 / DSM 11879 / JCM 9820 / NBRC 100138 / K1).